The following is a 218-amino-acid chain: Ras-related protein Rab-27B (218 aa).

Threonine 2 carries the post-translational modification N-acetylthreonine. 16 to 24 (GDSGVGKTT) is a binding site for GTP. Residues 38–46 (FITTVGIDF) carry the Effector region motif. Residues 74–78 (DTAGQ), 133–136 (NKAD), and 163–165 (SAA) contribute to the GTP site. Cysteine 123 and cysteine 188 are joined by a disulfide. Residues cysteine 216 and cysteine 218 are each lipidated (S-geranylgeranyl cysteine). Cysteine 218 carries the cysteine methyl ester modification.

Belongs to the small GTPase superfamily. Rab family. Interacts with SYTL2, SYTL4, MYRIP and MLPH. Interacts with RPH3A and RPH3A. Interacts (GDP-bound form preferentially) with DENND10.

It is found in the membrane. The protein resides in the late endosome. The catalysed reaction is GTP + H2O = GDP + phosphate + H(+). With respect to regulation, regulated by guanine nucleotide exchange factors (GEFs) which promote the exchange of bound GDP for free GTP, GTPase activating proteins (GAPs) which increase the GTP hydrolysis activity, and GDP dissociation inhibitors which inhibit the dissociation of the nucleotide from the GTPase. Activated by GEFs such as DENND10. Small GTPase which cycles between active GTP-bound and inactive GDP-bound states. In its active state, binds to a variety of effector proteins to regulate homeostasis of late endocytic pathway, including endosomal positioning, maturation and secretion. Plays a role in NTRK2/TRKB axonal anterograde transport by facilitating the association of NTRK2/TRKB with KLC1. May be involved in targeting uroplakins to urothelial apical membranes. This chain is Ras-related protein Rab-27B (Rab27b), found in Rattus norvegicus (Rat).